The chain runs to 527 residues: Probable glucomannan 4-beta-mannosyltransferase 9 (527 aa).

The chain crosses the membrane as a helical span at residues 37 to 59; that stretch reads AMSVMLFVEKVYMSVVLVGVHLF. Residue D131 is part of the active site. Substrate contacts are provided by D190 and D192. D284 is an active-site residue. A run of 4 helical transmembrane segments spans residues 363 to 383, 399 to 419, 478 to 498, and 505 to 525; these read IIGH…TVLI, IVTI…IFWV, ALEL…IAYG, and FLFL…GTIV.

It belongs to the glycosyltransferase 2 family. Plant cellulose synthase-like A subfamily.

It is found in the golgi apparatus membrane. It catalyses the reaction GDP-mannose + (glucomannan)n = GDP + (glucomannan)n+1.. Probable mannan synthase which consists of a 4-beta-mannosyltransferase activity on mannan using GDP-mannose. The beta-1,4-mannan product is the backbone for galactomannan synthesis by galactomannan galactosyltransferase. Galactomannan is a noncellulosic polysaccharides of plant cell wall. The protein is Probable glucomannan 4-beta-mannosyltransferase 9 of Oryza sativa subsp. japonica (Rice).